The chain runs to 250 residues: Isoprenyl transferase (250 aa).

Residue Asp26 is part of the active site. Asp26 lines the Mg(2+) pocket. Substrate contacts are provided by residues 27 to 30 (GNGR), Trp31, Arg39, His43, and 71 to 73 (STE). Catalysis depends on Asn74, which acts as the Proton acceptor. Residues Trp75, Arg77, Arg198, and 204 to 206 (RLS) each bind substrate. Glu217 provides a ligand contact to Mg(2+).

It belongs to the UPP synthase family. In terms of assembly, homodimer. Requires Mg(2+) as cofactor.

Functionally, catalyzes the condensation of isopentenyl diphosphate (IPP) with allylic pyrophosphates generating different type of terpenoids. This Streptococcus agalactiae serotype V (strain ATCC BAA-611 / 2603 V/R) protein is Isoprenyl transferase.